Consider the following 1178-residue polypeptide: DNA-directed RNA polymerase subunit beta (1178 aa).

A disordered region spans residues 1–37 (MLEGCILADSRQSKTAASPSPSRPQSSSNNSVPGAPN). Positions 18-33 (SPSPSRPQSSSNNSVP) are enriched in low complexity.

Belongs to the RNA polymerase beta chain family. As to quaternary structure, the RNAP catalytic core consists of 2 alpha, 1 beta, 1 beta' and 1 omega subunit. When a sigma factor is associated with the core the holoenzyme is formed, which can initiate transcription.

It catalyses the reaction RNA(n) + a ribonucleoside 5'-triphosphate = RNA(n+1) + diphosphate. DNA-dependent RNA polymerase catalyzes the transcription of DNA into RNA using the four ribonucleoside triphosphates as substrates. This Mycobacterium tuberculosis (strain CDC 1551 / Oshkosh) protein is DNA-directed RNA polymerase subunit beta.